The primary structure comprises 79 residues: UPF0154 protein lwe1321 (79 aa).

Residues tryptophan 2–isoleucine 22 traverse the membrane as a helical segment. A compositionally biased stretch (polar residues) spans lysine 57 to asparagine 66. The tract at residues lysine 57–lysine 79 is disordered.

This sequence belongs to the UPF0154 family.

The protein localises to the cell membrane. This chain is UPF0154 protein lwe1321, found in Listeria welshimeri serovar 6b (strain ATCC 35897 / DSM 20650 / CCUG 15529 / CIP 8149 / NCTC 11857 / SLCC 5334 / V8).